Here is a 141-residue protein sequence, read N- to C-terminus: Small ribosomal subunit protein uS19 (141 aa).

It belongs to the universal ribosomal protein uS19 family.

In terms of biological role, protein S19 forms a complex with S13 that binds strongly to the 16S ribosomal RNA. The polypeptide is Small ribosomal subunit protein uS19 (Halorubrum lacusprofundi (strain ATCC 49239 / DSM 5036 / JCM 8891 / ACAM 34)).